The following is a 563-amino-acid chain: 2-isopropylmalate synthase (563 aa).

One can recognise a Pyruvate carboxyltransferase domain in the interval 31 to 305; that stretch reads PIWMSTDLRD…DPGLDFAQIN (275 aa). Residues D40, H244, H246, and N280 each contribute to the Mg(2+) site. Residues 437-563 form a regulatory domain region; that stretch reads RAEPIEYLSH…EWARLCGGAE (127 aa).

Belongs to the alpha-IPM synthase/homocitrate synthase family. LeuA type 2 subfamily. As to quaternary structure, homodimer. Mg(2+) is required as a cofactor.

The protein localises to the cytoplasm. It carries out the reaction 3-methyl-2-oxobutanoate + acetyl-CoA + H2O = (2S)-2-isopropylmalate + CoA + H(+). It functions in the pathway amino-acid biosynthesis; L-leucine biosynthesis; L-leucine from 3-methyl-2-oxobutanoate: step 1/4. In terms of biological role, catalyzes the condensation of the acetyl group of acetyl-CoA with 3-methyl-2-oxobutanoate (2-ketoisovalerate) to form 3-carboxy-3-hydroxy-4-methylpentanoate (2-isopropylmalate). This Parvibaculum lavamentivorans (strain DS-1 / DSM 13023 / NCIMB 13966) protein is 2-isopropylmalate synthase.